The chain runs to 118 residues: MSSKNKIIQELEAEQLKQDVPEFSPGDTVVVQVKVKEGNRERLQAFEGVVIARRNRGLDSAFTVRKISHGIGVERTFQTHSKQVDSVAVKRRGDVRQAKLYYLRELTGRAARIKEKLG.

The protein belongs to the bacterial ribosomal protein bL19 family.

This protein is located at the 30S-50S ribosomal subunit interface and may play a role in the structure and function of the aminoacyl-tRNA binding site. This chain is Large ribosomal subunit protein bL19, found in Saccharophagus degradans (strain 2-40 / ATCC 43961 / DSM 17024).